A 119-amino-acid chain; its full sequence is uncharacterized protein (119 aa).

Residues 74 to 91 (LSVHFLLNVISAILSMLI) form a helical membrane-spanning segment.

The protein resides in the membrane. This is an uncharacterized protein from Schizosaccharomyces pombe (strain 972 / ATCC 24843) (Fission yeast).